The chain runs to 137 residues: Protein MesC (137 aa).

This Leuconostoc mesenteroides protein is Protein MesC (mesC).